The sequence spans 406 residues: MPSTGSTPILAHDVKSPHRGSLALDGGKTGYRVTVHREDRYEIIIGRGTLARLGELLRPVMAANEADSAVIITDNHVGPLYAELVTKRISATGAPVQCIVIPAGEPSKSIAQAHRLWDELRSRSVRRRTFLVALGGGVLCDLVGFVATTYLRGIPYVNVATSLMGQVDGAIGGKVGVDHSTGKNLIGGFYHPDLVVIDPSCLATLPLAEVINGLAEAVKVALIGTPGLFEQLERLPMSTAWPLDQAAPERLIEGLGPIIPAAIGKKLELLAPDPFEQDLRRLLNLGHSVGHGLEAATHFVRYRHGEAVAIGTATVTAISTGLGLTSVDTLRRILRLLQKLRLPVTVPDDLREVVWQHLETARLVRNGRLLLVMPTAIDHSVIIDDITRGQYDAACQLVAQEAPACG.

Residues Met1 to Ser21 are disordered. NAD(+) is bound by residues Glu105–Lys108, Gly137–Asp141, Thr161–Ser162, Lys174, Lys183, and Cys201–Thr204. Glu216, His287, and His304 together coordinate Zn(2+).

The protein belongs to the sugar phosphate cyclases superfamily. EVS family. NAD(+) is required as a cofactor. The cofactor is Co(2+). Zn(2+) serves as cofactor.

It carries out the reaction D-sedoheptulose 7-phosphate = 2-epi-valiolone + phosphate. In terms of biological role, catalyzes the conversion of sedoheptulose 7-phosphate to 2-epi-valiolone, which may serve as an alternative precursor for aminocyclitol biosynthesis. This chain is 2-epi-valiolone synthase, found in Stigmatella aurantiaca (strain DW4/3-1).